We begin with the raw amino-acid sequence, 649 residues long: DNA mismatch repair protein MutL (649 aa).

Belongs to the DNA mismatch repair MutL/HexB family.

Functionally, this protein is involved in the repair of mismatches in DNA. It is required for dam-dependent methyl-directed DNA mismatch repair. May act as a 'molecular matchmaker', a protein that promotes the formation of a stable complex between two or more DNA-binding proteins in an ATP-dependent manner without itself being part of a final effector complex. This is DNA mismatch repair protein MutL from Streptococcus pneumoniae serotype 19F (strain G54).